A 342-amino-acid polypeptide reads, in one-letter code: Glycerol-3-phosphate dehydrogenase [NAD(P)+] (342 aa).

NADPH-binding residues include Trp-11, Arg-31, and Lys-102. Lys-102 and Gly-132 together coordinate sn-glycerol 3-phosphate. An NADPH-binding site is contributed by Ala-136. Positions 187, 240, 250, 251, and 252 each coordinate sn-glycerol 3-phosphate. Lys-187 acts as the Proton acceptor in catalysis. Arg-251 is an NADPH binding site. Glu-277 is a binding site for NADPH.

The protein belongs to the NAD-dependent glycerol-3-phosphate dehydrogenase family.

The protein localises to the cytoplasm. The enzyme catalyses sn-glycerol 3-phosphate + NAD(+) = dihydroxyacetone phosphate + NADH + H(+). It catalyses the reaction sn-glycerol 3-phosphate + NADP(+) = dihydroxyacetone phosphate + NADPH + H(+). The protein operates within membrane lipid metabolism; glycerophospholipid metabolism. Functionally, catalyzes the reduction of the glycolytic intermediate dihydroxyacetone phosphate (DHAP) to sn-glycerol 3-phosphate (G3P), the key precursor for phospholipid synthesis. This Symbiobacterium thermophilum (strain DSM 24528 / JCM 14929 / IAM 14863 / T) protein is Glycerol-3-phosphate dehydrogenase [NAD(P)+].